The sequence spans 151 residues: 3-dehydroquinate dehydratase (151 aa).

The active-site Proton acceptor is the Y24. Substrate-binding residues include N76, H82, and D89. H102 serves as the catalytic Proton donor. Residues 103–104 (LS) and R113 each bind substrate.

It belongs to the type-II 3-dehydroquinase family. In terms of assembly, homododecamer.

It catalyses the reaction 3-dehydroquinate = 3-dehydroshikimate + H2O. The protein operates within metabolic intermediate biosynthesis; chorismate biosynthesis; chorismate from D-erythrose 4-phosphate and phosphoenolpyruvate: step 3/7. In terms of biological role, catalyzes a trans-dehydration via an enolate intermediate. In Acinetobacter baumannii (strain ATCC 17978 / DSM 105126 / CIP 53.77 / LMG 1025 / NCDC KC755 / 5377), this protein is 3-dehydroquinate dehydratase.